We begin with the raw amino-acid sequence, 927 residues long: Dual serine/threonine and tyrosine protein kinase (927 aa).

Residues 1–21 form a disordered region; it reads MEADGQSWAGESVSGPGPGGG. A coiled-coil region spans residues 393–429; it reads RKKENELYESLMNIANRKQEEMKDMIVETLNTMKEEL. The Protein kinase domain occupies 650–904; it reads PKLGQELGRG…PLLGIVQPML (255 aa). Residues 656–664 and Lys-679 contribute to the ATP site; that span reads LGRGQYGVV. The active-site Proton acceptor is the Asp-775.

The protein belongs to the protein kinase superfamily. Ser/Thr protein kinase family. As to expression, expressed in brain, heart, skeletal muscle, kidney and lung. Expressed in maturing tubular epithelia, with the most prominent expression in the medulla and the papilla. Expressed in thin ascending limb of the loop of Henle and the distal convoluted tubule. Expressed in all layers of transitional ureteric epithelium and in the ureteric smooth-muscle cells (at protein level). Widely expressed. Highly expressed in many brain regions, including in cerebellum, olfactory, hippocampus and cerebral cortex.

The protein resides in the cytoplasm. Its subcellular location is the cell membrane. It localises to the apical cell membrane. It is found in the basolateral cell membrane. The protein localises to the cell junction. It catalyses the reaction L-seryl-[protein] + ATP = O-phospho-L-seryl-[protein] + ADP + H(+). The enzyme catalyses L-threonyl-[protein] + ATP = O-phospho-L-threonyl-[protein] + ADP + H(+). The catalysed reaction is L-tyrosyl-[protein] + ATP = O-phospho-L-tyrosyl-[protein] + ADP + H(+). Acts as a positive regulator of ERK phosphorylation downstream of fibroblast growth factor-receptor activation. Involved in the regulation of both caspase-dependent apoptosis and caspase-independent cell death. In the skin, it plays a predominant role in suppressing caspase-dependent apoptosis in response to UV stress in a range of dermal cell types. This is Dual serine/threonine and tyrosine protein kinase (Dstyk) from Mus musculus (Mouse).